The primary structure comprises 407 residues: Serine/threonine transporter SstT (407 aa).

9 consecutive transmembrane segments (helical) span residues 14 to 34 (GSLV…ATVS), 48 to 68 (FVGA…AASI), 82 to 102 (IVIL…LMSF), 141 to 161 (AVIT…GLAL), 192 to 212 (IGIF…AIAG), 218 to 238 (LVLL…IVFF), 290 to 310 (IPLG…ILTL), 316 to 336 (MGIQ…GVSA), and 363 to 383 (VAMQ…SAET).

It belongs to the dicarboxylate/amino acid:cation symporter (DAACS) (TC 2.A.23) family.

It localises to the cell inner membrane. It carries out the reaction L-serine(in) + Na(+)(in) = L-serine(out) + Na(+)(out). The enzyme catalyses L-threonine(in) + Na(+)(in) = L-threonine(out) + Na(+)(out). Its function is as follows. Involved in the import of serine and threonine into the cell, with the concomitant import of sodium (symport system). This chain is Serine/threonine transporter SstT, found in Shewanella pealeana (strain ATCC 700345 / ANG-SQ1).